We begin with the raw amino-acid sequence, 476 residues long: Membrane-bound lytic murein transglycosylase F (476 aa).

The first 22 residues, 1-22 (MTRFLFALILGFLLTACQQVTV), serve as a signal peptide directing secretion. Residues 23-257 (DETEFVPKKL…HLNEKYFGHV (235 aa)) are non-LT domain. The interval 258-476 (KRFDYVDTRA…AGTLSPEQPK (219 aa)) is LT domain. Glu302 is an active-site residue. The disordered stretch occupies residues 446 to 476 (SKQQNPEEEPSDLASEEPAIPAGTLSPEQPK). The span at 451–460 (PEEEPSDLAS) shows a compositional bias: acidic residues.

It in the N-terminal section; belongs to the bacterial solute-binding protein 3 family. In the C-terminal section; belongs to the transglycosylase Slt family.

Its subcellular location is the cell outer membrane. It carries out the reaction Exolytic cleavage of the (1-&gt;4)-beta-glycosidic linkage between N-acetylmuramic acid (MurNAc) and N-acetylglucosamine (GlcNAc) residues in peptidoglycan, from either the reducing or the non-reducing ends of the peptidoglycan chains, with concomitant formation of a 1,6-anhydrobond in the MurNAc residue.. Functionally, murein-degrading enzyme that degrades murein glycan strands and insoluble, high-molecular weight murein sacculi, with the concomitant formation of a 1,6-anhydromuramoyl product. Lytic transglycosylases (LTs) play an integral role in the metabolism of the peptidoglycan (PG) sacculus. Their lytic action creates space within the PG sacculus to allow for its expansion as well as for the insertion of various structures such as secretion systems and flagella. This is Membrane-bound lytic murein transglycosylase F from Shewanella baltica (strain OS155 / ATCC BAA-1091).